A 329-amino-acid chain; its full sequence is Ribose-phosphate pyrophosphokinase B (329 aa).

Mg(2+) is bound by residues Asp-131, His-133, and Glu-146. The interval Thr-227–Lys-242 is binding of phosphoribosylpyrophosphate.

Belongs to the ribose-phosphate pyrophosphokinase family. Mg(2+) serves as cofactor.

It is found in the cytoplasm. The catalysed reaction is D-ribose 5-phosphate + ATP = 5-phospho-alpha-D-ribose 1-diphosphate + AMP + H(+). Its pathway is metabolic intermediate biosynthesis; 5-phospho-alpha-D-ribose 1-diphosphate biosynthesis; 5-phospho-alpha-D-ribose 1-diphosphate from D-ribose 5-phosphate (route I): step 1/1. This is Ribose-phosphate pyrophosphokinase B (prsB) from Dictyostelium discoideum (Social amoeba).